A 178-amino-acid polypeptide reads, in one-letter code: Gamma-crystallin S (178 aa).

Serine 2 bears the N-acetylserine mark. An N-terminal arm region spans residues 2–5; it reads SKTG. Beta/gamma crystallin 'Greek key' domains lie at 6-44 and 45-87; these read GKIS…RVEG and GTWA…RAVH. The interval 88 to 93 is connecting peptide; the sequence is LSSGGQ. 2 Beta/gamma crystallin 'Greek key' domains span residues 94-134 and 135-177; these read AKIQ…KVVE and GTWI…RRIV.

This sequence belongs to the beta/gamma-crystallin family. As to quaternary structure, monomer.

Its function is as follows. Crystallins are the dominant structural components of the vertebrate eye lens. The chain is Gamma-crystallin S (Crygs) from Mus musculus (Mouse).